The sequence spans 451 residues: UPF0210 protein NMC1568 (451 aa).

It belongs to the UPF0210 family. Homodimer.

The chain is UPF0210 protein NMC1568 from Neisseria meningitidis serogroup C / serotype 2a (strain ATCC 700532 / DSM 15464 / FAM18).